A 96-amino-acid polypeptide reads, in one-letter code: uncharacterized protein (96 aa).

2 helical membrane passes run 27-47 (LYTV…FFFF) and 52-72 (MSAG…RPTI).

The protein localises to the cell membrane. This is an uncharacterized protein from Bacillus subtilis (strain 168).